We begin with the raw amino-acid sequence, 541 residues long: Calcium-dependent protein kinase 25 (541 aa).

Gly residues predominate over residues 1 to 11; that stretch reads MGQCCTGGGKA. The tract at residues 1 to 74 is disordered; the sequence is MGQCCTGGGK…AGPIGEVLER (74 aa). Glycine 2 carries N-myristoyl glycine lipidation. Low complexity predominate over residues 38–67; that stretch reads AKQQPCSPAAKAAATEAAAAASSSKKPAGP. In terms of domain architecture, Protein kinase spans 83–341; sequence YSIGKELGRG…AFQVLNHPWI (259 aa). ATP-binding positions include 89-97 and lysine 112; that span reads LGRGQFGVT. Catalysis depends on aspartate 207, which acts as the Proton acceptor. Positions 347-377 are autoinhibitory domain; sequence APDVPLDNVVLNRLKQFRAMNQFKKAALRII. EF-hand domains follow at residues 384–419, 420–455, 456–491, and 493–526; these read EEIKGLKEMFKNIDKDNSGTITLEELKNGLAKQGTK, FSDNEIEQLMEAADADGNGIIDYEEFVTATVHMNKM, DREEHLYTAFQYFDKDNSGYITKEELEQALKEQGLY, and ANEIKDVITDADSNNDGRIDYSEFVAMMRKGSGC. Positions 397, 399, 401, 403, 408, 433, 435, 437, 444, 469, 471, 473, 475, 480, 504, 506, 508, 510, and 515 each coordinate Ca(2+).

This sequence belongs to the protein kinase superfamily. Ser/Thr protein kinase family. CDPK subfamily. In terms of tissue distribution, specifically expressed in heading panicles, spikelets and mature pollen grains. Not expressed in vegetative tissues.

The protein localises to the membrane. The enzyme catalyses L-seryl-[protein] + ATP = O-phospho-L-seryl-[protein] + ADP + H(+). It carries out the reaction L-threonyl-[protein] + ATP = O-phospho-L-threonyl-[protein] + ADP + H(+). With respect to regulation, activated by calcium. Autophosphorylation may play an important role in the regulation of the kinase activity. In terms of biological role, may play a role in signal transduction pathways that involve calcium as a second messenger. The protein is Calcium-dependent protein kinase 25 of Oryza sativa subsp. japonica (Rice).